We begin with the raw amino-acid sequence, 452 residues long: Pup--protein ligase (452 aa).

Glutamate 9 is a Mg(2+) binding site. An ATP-binding site is contributed by arginine 53. Tyrosine 55 serves as a coordination point for Mg(2+). Aspartate 57 acts as the Proton acceptor in catalysis. Mg(2+) is bound at residue glutamate 63. ATP is bound by residues threonine 66 and tryptophan 419.

Belongs to the Pup ligase/Pup deamidase family. Pup-conjugating enzyme subfamily.

The enzyme catalyses ATP + [prokaryotic ubiquitin-like protein]-L-glutamate + [protein]-L-lysine = ADP + phosphate + N(6)-([prokaryotic ubiquitin-like protein]-gamma-L-glutamyl)-[protein]-L-lysine.. It participates in protein degradation; proteasomal Pup-dependent pathway. It functions in the pathway protein modification; protein pupylation. Its function is as follows. Catalyzes the covalent attachment of the prokaryotic ubiquitin-like protein modifier Pup to the proteasomal substrate proteins, thereby targeting them for proteasomal degradation. This tagging system is termed pupylation. The ligation reaction involves the side-chain carboxylate of the C-terminal glutamate of Pup and the side-chain amino group of a substrate lysine. In Acidothermus cellulolyticus (strain ATCC 43068 / DSM 8971 / 11B), this protein is Pup--protein ligase.